Here is a 435-residue protein sequence, read N- to C-terminus: Exopolysaccharide production protein ExoQ (435 aa).

10 helical membrane passes run 11-31 (PGAN…VFAY), 35-55 (FGQV…LVDY), 65-85 (YLWI…SAAP), 117-137 (GMIA…TYHY), 156-176 (LGFY…VLGE), 178-198 (GLWM…LLTS), 203-223 (SVLT…ITAL), 230-250 (LLFI…IYAG), 325-345 (VVET…TAFF), and 361-381 (MVLF…IDIL).

Its subcellular location is the cell membrane. Its pathway is glycan metabolism; exopolysaccharide biosynthesis. Functionally, involved in the production of exopolysaccharide. The polypeptide is Exopolysaccharide production protein ExoQ (exoQ) (Rhizobium meliloti (strain 1021) (Ensifer meliloti)).